A 300-amino-acid chain; its full sequence is NAD kinase (300 aa).

Asp-75 functions as the Proton acceptor in the catalytic mechanism. Residues 75 to 76, 149 to 150, Arg-177, Asp-179, 190 to 195, Ala-214, and Gln-248 contribute to the NAD(+) site; these read DG, ND, and TAYALS.

Belongs to the NAD kinase family. A divalent metal cation is required as a cofactor.

It localises to the cytoplasm. The catalysed reaction is NAD(+) + ATP = ADP + NADP(+) + H(+). In terms of biological role, involved in the regulation of the intracellular balance of NAD and NADP, and is a key enzyme in the biosynthesis of NADP. Catalyzes specifically the phosphorylation on 2'-hydroxyl of the adenosine moiety of NAD to yield NADP. The chain is NAD kinase from Paraburkholderia phytofirmans (strain DSM 17436 / LMG 22146 / PsJN) (Burkholderia phytofirmans).